The primary structure comprises 148 residues: Glutamyl-tRNA(Gln) amidotransferase subunit C, mitochondrial (148 aa).

The protein belongs to the GatC family. As to quaternary structure, subunit of the heterotrimeric GatCAB amidotransferase (AdT) complex, composed of A, B and C subunits.

The protein resides in the mitochondrion. The catalysed reaction is L-glutamyl-tRNA(Gln) + L-glutamine + ATP + H2O = L-glutaminyl-tRNA(Gln) + L-glutamate + ADP + phosphate + H(+). In terms of biological role, allows the formation of correctly charged Gln-tRNA(Gln) through the transamidation of misacylated Glu-tRNA(Gln) in the mitochondria. The reaction takes place in the presence of glutamine and ATP through an activated gamma-phospho-Glu-tRNA(Gln). This chain is Glutamyl-tRNA(Gln) amidotransferase subunit C, mitochondrial, found in Drosophila melanogaster (Fruit fly).